The sequence spans 542 residues: Homeobox protein ceh-18 (542 aa).

Residues 243–252 are compositionally biased toward polar residues; that stretch reads NTPTQPTASL. The segment at 243 to 264 is disordered; the sequence is NTPTQPTASLTPKKAENRPPVV. The 75-residue stretch at 290-364 folds into the POU-specific domain; the sequence is DDRIDMNELE…LLKEWLADVE (75 aa). A DNA-binding region (homeobox) is located at residues 421-480; it reads RRRKRTNLDMNQRNALDTFFALNPRPDHDKMTDIANSLELDRDVVRVWFCNRRQKMRRVD. A disordered region spans residues 514-542; sequence LASCQASNDDSDGTSGSPDAPSNDGCSDL. Residues 517–530 show a composition bias toward polar residues; sequence CQASNDDSDGTSGS.

Belongs to the POU transcription factor family. Interacts with akir-1. As to expression, expressed in the gonadal sheath cells that signal the oocyte, but not in the oocyte.

It is found in the nucleus. Its function is as follows. Directs gonadal sheath cell differentiation and function. Also directs gonad migration and plays a role in specifying the differentiated phenotypes of epidermal cells during postembryonic development. Plays a role in oogenesis, regulating a sheath cell signal that causes oocytes to maintain diakinesis arrest during meiosis. Negatively regulates oocyte maturation, ovulation and MAPK activation in oocytes when sperm are not available for fertilization. May be recruited by akir-1 to the promoter regions of antimicrobial peptide genes to control gene expression in response to fungal infection. The chain is Homeobox protein ceh-18 from Caenorhabditis elegans.